Here is a 401-residue protein sequence, read N- to C-terminus: tRNA pseudouridine synthase Pus10 (401 aa).

A THUMP domain is found at Ala64–Pro195.

This sequence belongs to the pseudouridine synthase Pus10 family.

It carries out the reaction uridine(54) in tRNA = pseudouridine(54) in tRNA. The catalysed reaction is uridine(55) in tRNA = pseudouridine(55) in tRNA. Functionally, responsible for synthesis of pseudouridine from uracil-54 and uracil-55 in the psi GC loop of transfer RNAs. The sequence is that of tRNA pseudouridine synthase Pus10 from Caldivirga maquilingensis (strain ATCC 700844 / DSM 13496 / JCM 10307 / IC-167).